We begin with the raw amino-acid sequence, 337 residues long: Protein-arginine kinase (337 aa).

The 229-residue stretch at 12 to 240 folds into the Phosphagen kinase C-terminal domain; it reads IVIASKVKIL…NKLILREKNQ (229 aa). ATP contacts are provided by residues 15–19, 162–166, and 193–198; these read ASKVK, RAKVF, and KSIYNS.

The protein belongs to the ATP:guanido phosphotransferase family.

The enzyme catalyses L-arginyl-[protein] + ATP = N(omega)-phospho-L-arginyl-[protein] + ADP + H(+). Its function is as follows. Catalyzes the specific phosphorylation of arginine residues in proteins. This Clostridium perfringens (strain ATCC 13124 / DSM 756 / JCM 1290 / NCIMB 6125 / NCTC 8237 / Type A) protein is Protein-arginine kinase.